The primary structure comprises 544 residues: Propane 2-monooxygenase, hydroxylase component large subunit (544 aa).

The Fe cation site is built by Glu97, Glu127, His130, Glu192, Glu226, and His229.

The protein belongs to the TmoA/XamoA family. In terms of assembly, the propane 2-monooxygenase multicomponent enzyme system is composed of an electron transfer component and a monooxygenase component interacting with the effector protein PrmD. The electron transfer component is composed of a reductase (PrmB), and the monooxygenase component is formed by a large subunit (PrmA) and a small subunit (PrmC). Probably requires the presence of the chaperonin-like protein PrmG to ensure a productive folding, resulting of a soluble PrmA, which leads to the active form of PrmABCD. The cofactor is Fe(2+).

It catalyses the reaction propane + NADH + O2 + H(+) = propan-2-ol + NAD(+) + H2O. Component of the propane 2-monooxygenase multicomponent enzyme system which is involved in the degradation of propane via the O2-dependent hydroxylation of propane. Also able to catalyze the oxidation the water contaminant N-nitrosodimethylamine (NDMA). In Rhodococcus jostii (strain RHA1), this protein is Propane 2-monooxygenase, hydroxylase component large subunit.